The sequence spans 343 residues: Heat-inducible transcription repressor HrcA (343 aa).

Belongs to the HrcA family.

Its function is as follows. Negative regulator of class I heat shock genes (grpE-dnaK-dnaJ and groELS operons). Prevents heat-shock induction of these operons. In Mycobacterium leprae (strain Br4923), this protein is Heat-inducible transcription repressor HrcA.